We begin with the raw amino-acid sequence, 34 residues long: Histone H1, sperm (34 aa).

Residues 1-34 form a disordered region; the sequence is PASPQKRAASPRRSPKKSPRKSPKKSPRKRSASP. The segment covering 9-34 has biased composition (basic residues); that stretch reads ASPRRSPKKSPRKSPKKSPRKRSASP.

Belongs to the histone H1/H5 family. Sperm.

It is found in the nucleus. The protein resides in the chromosome. Functionally, histones H1 are necessary for the condensation of nucleosome chains into higher-order structures. The polypeptide is Histone H1, sperm (Strongylocentrotus purpuratus (Purple sea urchin)).